The chain runs to 208 residues: Large ribosomal subunit protein uL4 (208 aa).

The disordered stretch occupies residues 50–83 (VKTRAEVSGGGRKPWKQKGTGRARQGSIRAPQWK).

This sequence belongs to the universal ribosomal protein uL4 family. In terms of assembly, part of the 50S ribosomal subunit.

Functionally, one of the primary rRNA binding proteins, this protein initially binds near the 5'-end of the 23S rRNA. It is important during the early stages of 50S assembly. It makes multiple contacts with different domains of the 23S rRNA in the assembled 50S subunit and ribosome. Its function is as follows. Forms part of the polypeptide exit tunnel. The sequence is that of Large ribosomal subunit protein uL4 from Mycoplasma capricolum subsp. capricolum (strain California kid / ATCC 27343 / NCTC 10154).